A 397-amino-acid chain; its full sequence is Aurora kinase A (397 aa).

Positions 1–118 are disordered; it reads MDRCKENCVS…SIQKTEDSKK (118 aa). 2 stretches are compositionally biased toward polar residues: residues 29-55 and 84-102; these read QIPS…SQRV and RLSN…SGNN. Phosphoserine is present on residues Ser40 and Ser50. Positions 103 to 118 are enriched in basic and acidic residues; the sequence is SEKEQTSIQKTEDSKK. In terms of domain architecture, Protein kinase spans 126 to 376; it reads FDIGRPLGKG…LAEVLEHPWI (251 aa). ATP contacts are provided by residues Lys136, Lys155, and 203–206; that span reads LEYA. Residue Asp249 is the Proton acceptor of the active site. Residue Lys251 forms a Glycyl lysine isopeptide (Lys-Gly) (interchain with G-Cter in SUMO2) linkage. ATP is bound by residues 253 to 254 and Asp267; that span reads EN. The activation segment stretch occupies residues 273–286; the sequence is HAPSSRRTTLCGTL. Thr280 and Thr281 each carry phosphothreonine. Position 335 is a phosphoserine; by PKA and PAK (Ser335). Residues 378-387 are compositionally biased toward polar residues; that stretch reads ANSSKPPTGH. A disordered region spans residues 378 to 397; sequence ANSSKPPTGHNSKEATSKSS. Positions 388–397 are enriched in basic and acidic residues; sequence NSKEATSKSS.

The protein belongs to the protein kinase superfamily. Ser/Thr protein kinase family. Aurora subfamily. Part of a complex composed of NEDD9, AURKA and CTTN; within the complex NEDD9 acts as a scaffold protein and is required for complex formation. Identified in a complex with AUNIP and NIN. Interacts with CPEB1, JTB, TACC1, TPX2, PPP2CA, as well as with the protein phosphatase type 1 (PP1) isoforms PPP1CA, PPP1CB and PPP1CC. Also interacts with its substrates ARHGEF2, BORA, KIF2A, PARD3, and p53/TP53. Interaction with BORA promotes phosphorylation of PLK1. Interacts with FBXL7 and CIMAP3. Interacts with GADD45A, competing with its oligomerization. Interacts (via C-terminus) with AUNIP (via C-terminus). Interacts with SIRT2. Interacts with FRY; this interaction facilitates AURKA-mediated PLK1 phosphorylation. Interacts with MYCN; interaction is phospho-independent and triggers AURKA activation; AURKA competes with FBXW7 for binding to unphosphorylated MYCN but not for binding to phosphorylated MYCN. Interacts with HNRNPU. Interacts with AAAS. Interacts with KLHL18 and CUL3. Interacts with FOXP1. Interacts with HDAC6; AURKA-mediated phosphorylation of HDAC6 promotes deacetylation of alpha-tubulin. Post-translationally, activated by phosphorylation at Thr-281; this brings about a change in the conformation of the activation segment. Phosphorylation at Thr-281 varies during the cell cycle and is highest during M phase. Autophosphorylated at Thr-281 upon TPX2 binding. Thr-281 can be phosphorylated by several kinases, including PAK and PKA. Protein phosphatase type 1 (PP1) binds AURKA and inhibits its activity by dephosphorylating Thr-281 during mitosis. Phosphorylation at Ser-335 decreases the kinase activity. PPP2CA controls degradation by dephosphorylating Ser-52 at the end of mitosis. Phosphorylated in embryonic brain neurons. Ubiquitinated by CHFR, leading to its degradation by the proteasome. Ubiquitinated by the anaphase-promoting complex (APC), leading to its degradation by the proteasome. Ubiquitinated by the E3 ubiquitin-protein ligase complex SCF(FBXL7) during mitosis, leading to its degradation by the proteasome. Ubiquitinated by the CUL3-KLHL18 ligase leading to its activation at the centrosome which is required for initiating mitotic entry. Ubiquitination mediated by CUL3-KLHL18 ligase does not lead to its degradation by the proteasome. In terms of tissue distribution, detected in neurons in brain cortex and hippocampus (at protein level). Expressed in mammary gland and tumor.

The protein localises to the cytoplasm. The protein resides in the cytoskeleton. It is found in the microtubule organizing center. It localises to the centrosome. Its subcellular location is the spindle pole. The protein localises to the centriole. The protein resides in the cell projection. It is found in the neuron projection. It localises to the cilium. Its subcellular location is the cilium basal body. The protein localises to the basolateral cell membrane. It carries out the reaction L-seryl-[protein] + ATP = O-phospho-L-seryl-[protein] + ADP + H(+). It catalyses the reaction L-threonyl-[protein] + ATP = O-phospho-L-threonyl-[protein] + ADP + H(+). Activation of CDK1, appears to be an upstream event of AURKA activation. Phosphatase inhibitor-2 (PPP1R2) and TPX2 act also as activators. Inactivated by the G2 checkpoint. Inhibited by GADD45A and p53/TP53, and through dephosphorylation by protein phosphatase type 1 (PP1). MLN8054 is also a potent and selective inhibitor. Activated during the early phase of cilia disassembly in the presence of FBXL7 and CIMAP3. Inhibited by the small molecule inhibitor VX-680. In terms of biological role, mitotic serine/threonine kinase that contributes to the regulation of cell cycle progression. Associates with the centrosome and the spindle microtubules during mitosis and plays a critical role in various mitotic events including the establishment of mitotic spindle, centrosome duplication, centrosome separation as well as maturation, chromosomal alignment, spindle assembly checkpoint, and cytokinesis. Required for normal spindle positioning during mitosis and for the localization of NUMA1 and DCTN1 to the cell cortex during metaphase. Required for initial activation of CDK1 at centrosomes. Phosphorylates numerous target proteins, including ARHGEF2, BORA, BRCA1, CDC25B, DLGP5, HDAC6, KIF2A, LATS2, NDEL1, PARD3, PPP1R2, PLK1, RASSF1, TACC3, p53/TP53 and TPX2. Phosphorylates MCRS1 which is required for MCRS1-mediated kinetochore fiber assembly and mitotic progression. Regulates KIF2A tubulin depolymerase activity. Required for normal axon formation. Plays a role in microtubule remodeling during neurite extension. Important for microtubule formation and/or stabilization. Also acts as a key regulatory component of the p53/TP53 pathway, and particularly the checkpoint-response pathways critical for oncogenic transformation of cells, by phosphorylating and stabilizating p53/TP53. Phosphorylates its own inhibitors, the protein phosphatase type 1 (PP1) isoforms, to inhibit their activity. Inhibits cilia outgrowth. Required for cilia disassembly via phosphorylation of HDAC6 and subsequent deacetylation of alpha-tubulin. Regulates protein levels of the anti-apoptosis protein BIRC5 by suppressing the expression of the SCF(FBXL7) E3 ubiquitin-protein ligase substrate adapter FBXL7 through the phosphorylation of the transcription factor FOXP1. This is Aurora kinase A from Rattus norvegicus (Rat).